A 147-amino-acid chain; its full sequence is Transthyretin (147 aa).

Positions 1–20 are cleaved as a signal peptide; sequence MASFRLLLLCLAGLVFVSEA. Cysteine 30 bears the Sulfocysteine mark. Lysine 35 lines the L-thyroxine pocket. Glutamate 62 bears the 4-carboxyglutamate mark. Phosphoserine is present on serine 72. An L-thyroxine-binding site is contributed by glutamate 74. Asparagine 118 carries N-linked (GlcNAc...) asparagine glycosylation. Residue serine 137 coordinates L-thyroxine.

Belongs to the transthyretin family. Homotetramer. Dimer of dimers. In the homotetramer, subunits assemble around a central channel that can accommodate two ligand molecules. Interacts with RBP4. Post-translationally, sulfonation of the reactive cysteine Cys-30 enhances the stability of the native conformation of TTR, avoiding misassembly of the protein leading to amyloid formation. As to expression, highly expressed in the choroid plexus.

It is found in the secreted. Functionally, thyroid hormone-binding protein. Probably transports thyroxine from the bloodstream to the brain. The sequence is that of Transthyretin (TTR) from Ovis aries (Sheep).